A 206-amino-acid chain; its full sequence is MQPFRTLHSTVTPLDRVNVDTDQIIPKQFLKRIERTGYGEFLFFDWRQDPAFELNQPRYKGSQILVANKNFGCGSSREHAAWALGDFGFRCVISSSFADIFHSNAGKNGILLVKLSEGDVNTLLERAQKTQGYSLTVSLEEQTVKDGQGFSDSFEIDAFRRYCLLEGLDDIGLTMRYQDKLDAFEKEHDGKFWLAPRGGLAASRTS.

The protein belongs to the LeuD family. LeuD type 1 subfamily. Heterodimer of LeuC and LeuD.

The enzyme catalyses (2R,3S)-3-isopropylmalate = (2S)-2-isopropylmalate. The protein operates within amino-acid biosynthesis; L-leucine biosynthesis; L-leucine from 3-methyl-2-oxobutanoate: step 2/4. Catalyzes the isomerization between 2-isopropylmalate and 3-isopropylmalate, via the formation of 2-isopropylmaleate. The protein is 3-isopropylmalate dehydratase small subunit of Acidobacterium capsulatum (strain ATCC 51196 / DSM 11244 / BCRC 80197 / JCM 7670 / NBRC 15755 / NCIMB 13165 / 161).